A 129-amino-acid polypeptide reads, in one-letter code: Putative F-box protein At3g42722 (129 aa).

One can recognise an F-box domain in the interval 4–50 (MASIDCLPDELLVGILSFILTNEAASTSILSKRWRTLFAFSHNLDCN).

The chain is Putative F-box protein At3g42722 from Arabidopsis thaliana (Mouse-ear cress).